The primary structure comprises 203 residues: Nascent polypeptide-associated complex subunit alpha (203 aa).

The segment covering 1 to 19 has biased composition (basic and acidic residues); the sequence is MADPRIEELPDEEVPKTNV. The segment at 1–45 is disordered; it reads MADPRIEELPDEEVPKTNVEDAADSSESEAGEEPTIPGGAAVTIH. The span at 21-32 shows a compositional bias: acidic residues; it reads DAADSSESEAGE. The NAC-A/B domain occupies 46-111; sequence SRNEKKARKA…AKIEDLNSQA (66 aa). A disordered region spans residues 118–167; the sequence is QLAAAEAAGEHAGHDHDHDKGKGKAPETEAKKEEEEDDGEEVDETGLEPK. The span at 125–150 shows a compositional bias: basic and acidic residues; the sequence is AGEHAGHDHDHDKGKGKAPETEAKKE. Acidic residues predominate over residues 151–163; it reads EEEDDGEEVDETG. Residues 164–203 enclose the UBA domain; sequence LEPKDIDLVMAQANVSRKKAVKALRENDNDIVNSIMALSI.

Belongs to the NAC-alpha family. As to quaternary structure, part of the nascent polypeptide-associated complex (NAC), consisting of egd2 and egd1. NAC associates with ribosomes via egd1.

It localises to the cytoplasm. It is found in the nucleus. Component of the nascent polypeptide-associated complex (NAC), a dynamic component of the ribosomal exit tunnel, protecting the emerging polypeptides from interaction with other cytoplasmic proteins to ensure appropriate nascent protein targeting. The NAC complex also promotes mitochondrial protein import by enhancing productive ribosome interactions with the outer mitochondrial membrane and blocks the inappropriate interaction of ribosomes translating non-secretory nascent polypeptides with translocation sites in the membrane of the endoplasmic reticulum. Egd2 may also be involved in transcription regulation. The protein is Nascent polypeptide-associated complex subunit alpha (egd2) of Emericella nidulans (strain FGSC A4 / ATCC 38163 / CBS 112.46 / NRRL 194 / M139) (Aspergillus nidulans).